The primary structure comprises 388 residues: Probable peptidoglycan glycosyltransferase FtsW (388 aa).

A run of 11 helical transmembrane segments spans residues 16-36 (LVLI…SSSV), 54-74 (VFAL…PSQS), 82-102 (WFLL…EIGG), 109-129 (LVVM…LFLA), 144-164 (TAVI…LLQP), 167-187 (GTTV…GAPF), 189-209 (YFVI…INSP), 233-253 (SQAL…GASV), 277-297 (WLGV…MFAV), 310-330 (ALVV…NVGV), and 342-362 (LPFV…IGLV).

The protein belongs to the SEDS family. FtsW subfamily.

Its subcellular location is the cell inner membrane. It carries out the reaction [GlcNAc-(1-&gt;4)-Mur2Ac(oyl-L-Ala-gamma-D-Glu-L-Lys-D-Ala-D-Ala)](n)-di-trans,octa-cis-undecaprenyl diphosphate + beta-D-GlcNAc-(1-&gt;4)-Mur2Ac(oyl-L-Ala-gamma-D-Glu-L-Lys-D-Ala-D-Ala)-di-trans,octa-cis-undecaprenyl diphosphate = [GlcNAc-(1-&gt;4)-Mur2Ac(oyl-L-Ala-gamma-D-Glu-L-Lys-D-Ala-D-Ala)](n+1)-di-trans,octa-cis-undecaprenyl diphosphate + di-trans,octa-cis-undecaprenyl diphosphate + H(+). Its pathway is cell wall biogenesis; peptidoglycan biosynthesis. Its function is as follows. Peptidoglycan polymerase that is essential for cell division. The chain is Probable peptidoglycan glycosyltransferase FtsW from Thiomicrospira cyclica (strain DSM 14477 / JCM 11371 / ALM1) (Thioalkalimicrobium cyclicum).